The chain runs to 681 residues: Ribosomal L1 domain-containing protein CG13096 (681 aa).

Disordered regions lie at residues 1-248 (MVKV…AKSK) and 579-681 (DAAP…DDEE). 2 positions are modified to phosphoserine: Ser-15 and Ser-17. A compositionally biased stretch (basic and acidic residues) spans 54–74 (VKKDAIKKEPEVSKKGAEKKQ). Position 89 is a phosphoserine (Ser-89). The segment covering 103–112 (KPAASGAPVG) has biased composition (low complexity). At Ser-128 the chain carries Phosphoserine. Residues 189-217 (QAAPAKPAKAQPASQLQKKAKAVQKLSKP) are compositionally biased toward low complexity. Residues 599 to 610 (KESSSEGAKADA) are compositionally biased toward basic and acidic residues. Acidic residues predominate over residues 611-681 (ESDEEEEVEE…EDDDDDDDEE (71 aa)).

The protein belongs to the universal ribosomal protein uL1 family. Highly divergent.

This Drosophila melanogaster (Fruit fly) protein is Ribosomal L1 domain-containing protein CG13096.